A 141-amino-acid chain; its full sequence is uncharacterized protein (141 aa).

Transmembrane regions (helical) follow at residues 20–42 and 52–74; these read FLVN…FCLA and LHLC…IFTL.

It localises to the cell membrane. This is an uncharacterized protein from Archaeoglobus fulgidus (strain ATCC 49558 / DSM 4304 / JCM 9628 / NBRC 100126 / VC-16).